Consider the following 283-residue polypeptide: ATP synthase gamma chain (283 aa).

This sequence belongs to the ATPase gamma chain family. In terms of assembly, F-type ATPases have 2 components, CF(1) - the catalytic core - and CF(0) - the membrane proton channel. CF(1) has five subunits: alpha(3), beta(3), gamma(1), delta(1), epsilon(1). CF(0) has three main subunits: a, b and c.

It is found in the cell membrane. Its function is as follows. Produces ATP from ADP in the presence of a proton gradient across the membrane. The gamma chain is believed to be important in regulating ATPase activity and the flow of protons through the CF(0) complex. The polypeptide is ATP synthase gamma chain (Exiguobacterium sibiricum (strain DSM 17290 / CCUG 55495 / CIP 109462 / JCM 13490 / 255-15)).